Consider the following 90-residue polypeptide: SAGA-associated factor 11 (90 aa).

An SGF11-type zinc finger spans residues 63-84 (FSCDNCGRKIAGGRFAQHINKC).

The protein belongs to the SGF11 family. As to quaternary structure, component of the 1.8 MDa SAGA transcription coactivator-HAT complex. SAGA is built of 5 distinct domains with specialized functions. Within the SAGA complex, SUS1, SGF11, SGF73 and UBP8 form an additional subcomplex of SAGA called the DUB module (deubiquitination module). Interacts directly with SGF73, SUS1 and UBP8.

The protein localises to the nucleus. Its function is as follows. Functions as a component of the transcription regulatory histone acetylation (HAT) complex SAGA. At the promoters, SAGA is required for recruitment of the basal transcription machinery. It influences RNA polymerase II transcriptional activity through different activities such as TBP interaction and promoter selectivity, interaction with transcription activators, and chromatin modification through histone acetylation and deubiquitination. SAGA acetylates nucleosomal histone H3 to some extent (to form H3K9ac, H3K14ac, H3K18ac and H3K23ac). SAGA interacts with DNA via upstream activating sequences (UASs). Involved in transcriptional regulation of a subset of SAGA-regulated genes. Within the SAGA complex, participates in a subcomplex, that specifically deubiquitinates histones H2B. The polypeptide is SAGA-associated factor 11 (Lodderomyces elongisporus (strain ATCC 11503 / CBS 2605 / JCM 1781 / NBRC 1676 / NRRL YB-4239) (Yeast)).